We begin with the raw amino-acid sequence, 356 residues long: Biotin synthase (356 aa).

One can recognise a Radical SAM core domain in the interval 51 to 270; sequence NKVQCNQLLN…IALARIMMPL (220 aa). Residues Cys66, Cys70, and Cys73 each contribute to the [4Fe-4S] cluster site. [2Fe-2S] cluster is bound by residues Cys110, Cys141, Cys201, and Arg274. The interval 310–356 is disordered; that stretch reads PGDNKDRSLFDRLGLEPRDDHGVHEHSSHSHTHDQGHDHGPHGHSHG. A compositionally biased stretch (basic and acidic residues) spans 312-350; it reads DNKDRSLFDRLGLEPRDDHGVHEHSSHSHTHDQGHDHGP.

Belongs to the radical SAM superfamily. Biotin synthase family. As to quaternary structure, homodimer. [4Fe-4S] cluster serves as cofactor. The cofactor is [2Fe-2S] cluster.

The catalysed reaction is (4R,5S)-dethiobiotin + (sulfur carrier)-SH + 2 reduced [2Fe-2S]-[ferredoxin] + 2 S-adenosyl-L-methionine = (sulfur carrier)-H + biotin + 2 5'-deoxyadenosine + 2 L-methionine + 2 oxidized [2Fe-2S]-[ferredoxin]. It participates in cofactor biosynthesis; biotin biosynthesis; biotin from 7,8-diaminononanoate: step 2/2. Functionally, catalyzes the conversion of dethiobiotin (DTB) to biotin by the insertion of a sulfur atom into dethiobiotin via a radical-based mechanism. The protein is Biotin synthase of Rhodopseudomonas palustris (strain BisB18).